A 220-amino-acid chain; its full sequence is GTP cyclohydrolase 1 (220 aa).

3 residues coordinate Zn(2+): C109, H112, and C180.

The protein belongs to the GTP cyclohydrolase I family. In terms of assembly, homomer.

The enzyme catalyses GTP + H2O = 7,8-dihydroneopterin 3'-triphosphate + formate + H(+). It functions in the pathway cofactor biosynthesis; 7,8-dihydroneopterin triphosphate biosynthesis; 7,8-dihydroneopterin triphosphate from GTP: step 1/1. The polypeptide is GTP cyclohydrolase 1 (Pectobacterium carotovorum subsp. carotovorum (strain PC1)).